A 161-amino-acid chain; its full sequence is tRNA-specific adenosine deaminase (161 aa).

The CMP/dCMP-type deaminase domain maps to 2–120 (TQDELYMKEA…GTLMNLLQEE (119 aa)). A Zn(2+)-binding site is contributed by His-53. Residue Glu-55 is the Proton donor of the active site. Cys-83 and Cys-86 together coordinate Zn(2+).

Belongs to the cytidine and deoxycytidylate deaminase family. As to quaternary structure, homodimer. The cofactor is Zn(2+).

It catalyses the reaction adenosine(34) in tRNA + H2O + H(+) = inosine(34) in tRNA + NH4(+). Its function is as follows. Catalyzes the deamination of adenosine to inosine at the wobble position 34 of tRNA(Arg2). The polypeptide is tRNA-specific adenosine deaminase (Bacillus subtilis (strain 168)).